A 99-amino-acid chain; its full sequence is Sec-independent protein translocase protein TatA (99 aa).

The chain crosses the membrane as a helical span at residues 1–21 (MIGNLKPLEIVLIIAVILLLF). A disordered region spans residues 46–99 (AMKKDDAATAAPTTETVADDTVPPQSTTARTIQAAPGDVTSSRPVSEAKPTTQS). Residues 53 to 69 (ATAAPTTETVADDTVPP) are compositionally biased toward low complexity. Over residues 84-99 (VTSSRPVSEAKPTTQS) the composition is skewed to polar residues.

Belongs to the TatA/E family. As to quaternary structure, the Tat system comprises two distinct complexes: a TatABC complex, containing multiple copies of TatA, TatB and TatC subunits, and a separate TatA complex, containing only TatA subunits. Substrates initially bind to the TatABC complex, which probably triggers association of the separate TatA complex to form the active translocon.

The protein resides in the cell membrane. Part of the twin-arginine translocation (Tat) system that transports large folded proteins containing a characteristic twin-arginine motif in their signal peptide across membranes. TatA could form the protein-conducting channel of the Tat system. This is Sec-independent protein translocase protein TatA from Streptomyces griseus subsp. griseus (strain JCM 4626 / CBS 651.72 / NBRC 13350 / KCC S-0626 / ISP 5235).